Here is a 141-residue protein sequence, read N- to C-terminus: Galactose-6-phosphate isomerase subunit LacA (141 aa).

This sequence belongs to the LacAB/RpiB family. As to quaternary structure, heteromultimeric protein consisting of LacA and LacB.

It carries out the reaction aldehydo-D-galactose 6-phosphate = keto-D-tagatose 6-phosphate. It functions in the pathway carbohydrate metabolism; D-galactose 6-phosphate degradation; D-tagatose 6-phosphate from D-galactose 6-phosphate: step 1/1. The chain is Galactose-6-phosphate isomerase subunit LacA from Streptococcus pneumoniae serotype 2 (strain D39 / NCTC 7466).